Reading from the N-terminus, the 150-residue chain is Nucleoside diphosphate kinase (150 aa).

ATP contacts are provided by lysine 10, phenylalanine 58, arginine 86, threonine 92, arginine 103, and asparagine 113. Histidine 116 (pros-phosphohistidine intermediate) is an active-site residue.

It belongs to the NDK family. Mg(2+) is required as a cofactor.

It is found in the cytoplasm. The enzyme catalyses a 2'-deoxyribonucleoside 5'-diphosphate + ATP = a 2'-deoxyribonucleoside 5'-triphosphate + ADP. It carries out the reaction a ribonucleoside 5'-diphosphate + ATP = a ribonucleoside 5'-triphosphate + ADP. Functionally, major role in the synthesis of nucleoside triphosphates other than ATP. The ATP gamma phosphate is transferred to the NDP beta phosphate via a ping-pong mechanism, using a phosphorylated active-site intermediate. This Methanobrevibacter smithii (strain ATCC 35061 / DSM 861 / OCM 144 / PS) protein is Nucleoside diphosphate kinase.